A 317-amino-acid chain; its full sequence is 2,3-dihydroxyphenylpropionate/2,3-dihydroxicinnamic acid 1,2-dioxygenase 2 (317 aa).

Catalysis depends on His115, which acts as the Proton donor. The active-site Proton acceptor is His179.

Belongs to the LigB/MhpB extradiol dioxygenase family. In terms of assembly, homotetramer. It depends on Fe(2+) as a cofactor.

The enzyme catalyses 3-(2,3-dihydroxyphenyl)propanoate + O2 = (2Z,4E)-2-hydroxy-6-oxonona-2,4-dienedioate + H(+). It catalyses the reaction (2E)-3-(2,3-dihydroxyphenyl)prop-2-enoate + O2 = (2Z,4E,7E)-2-hydroxy-6-oxonona-2,4,7-trienedioate + H(+). The protein operates within aromatic compound metabolism; 3-phenylpropanoate degradation. Catalyzes the non-heme iron(II)-dependent oxidative cleavage of 2,3-dihydroxyphenylpropionic acid and 2,3-dihydroxicinnamic acid into 2-hydroxy-6-ketononadienedioate and 2-hydroxy-6-ketononatrienedioate, respectively. This Dechloromonas aromatica (strain RCB) protein is 2,3-dihydroxyphenylpropionate/2,3-dihydroxicinnamic acid 1,2-dioxygenase 2.